A 205-amino-acid chain; its full sequence is Non-specific lipid transfer protein GPI-anchored 13 (205 aa).

A signal peptide spans 1–24 (MESRKIKVMATAIALIMVAMVVDA). 4 cysteine pairs are disulfide-bonded: Cys-36-Cys-77, Cys-46-Cys-61, Cys-62-Cys-104, and Cys-75-Cys-113. Residues Asn-93, Asn-137, and Asn-165 are each glycosylated (N-linked (GlcNAc...) asparagine). Residues 141 to 176 (SASAPTGSASEPTSMSSTPGSSAGNNSGRTTSVPGT) are disordered. A lipid anchor (GPI-anchor amidated asparagine) is attached at Asn-177. Residues 178–205 (HAQSFSKQWLGLEVVAHFFVIFYIFILV) constitute a propeptide, removed in mature form.

It belongs to the plant LTP family. In terms of tissue distribution, expressed preferentially in expanding leaves and sepals, restricted to the distal side. Expressed at low levels in roots and stems.

It is found in the cell membrane. Its function is as follows. Probable lipid transfer protein. This is Non-specific lipid transfer protein GPI-anchored 13 from Arabidopsis thaliana (Mouse-ear cress).